The primary structure comprises 509 residues: Putative aldehyde dehydrogenase family 7 member A1 homolog (509 aa).

244–249 (GSTEVG) serves as a coordination point for NAD(+). E266 serves as the catalytic Proton acceptor. C300 acts as the Nucleophile in catalysis.

This sequence belongs to the aldehyde dehydrogenase family. In terms of assembly, homotetramer.

The catalysed reaction is an aldehyde + NAD(+) + H2O = a carboxylate + NADH + 2 H(+). This chain is Putative aldehyde dehydrogenase family 7 member A1 homolog, found in Dictyostelium discoideum (Social amoeba).